Reading from the N-terminus, the 720-residue chain is ATP-dependent DNA helicase Hel308 (720 aa).

ATP-binding positions include S23, Q28, and 46–53 (IPTASGKT). Residues 33-197 (KSGILEGKNA…WLNAELIVSD (165 aa)) enclose the Helicase ATP-binding domain. The DEAH box signature appears at 145-148 (DEIH). Residues 229–422 (LVYDAIRKKK…NLRSQVLALI (194 aa)) enclose the Helicase C-terminal domain.

The protein belongs to the helicase family. Hel308 subfamily. Monomer. Interacts with PCNA. Mg(2+) serves as cofactor. The cofactor is Zn(2+).

It catalyses the reaction Couples ATP hydrolysis with the unwinding of duplex DNA by translocating in the 3'-5' direction.. The catalysed reaction is ATP + H2O = ADP + phosphate + H(+). Functionally, DNA-dependent ATPase and 3'-5' DNA helicase that may be involved in repair of stalled replication forks. Unwinds the lagging strand from forked DNA structures in a 3'-5' direction. PCNA, the DNA polymerase sliding clamp subunit, stimulates the helicase activity, and may alter substrate specificity. Unwinds branched DNA (Holliday junctions) in an ATP-dependent fashion; ss- and dsDNA stimulate ATPase to the greatest extent, although it preferentially binds DNA with a single-stranded region. Processes a RecA-mediated recombination intermediate between gapped circular and homologous linear dsDNA. The chain is ATP-dependent DNA helicase Hel308 from Pyrococcus furiosus (strain ATCC 43587 / DSM 3638 / JCM 8422 / Vc1).